We begin with the raw amino-acid sequence, 173 residues long: dCTP deaminase, dUMP-forming (173 aa).

Residues 93–98 (RSSIGR), D111, 119–121 (TLE), and Q138 each bind dCTP. Residue E121 is the Proton donor/acceptor of the active site.

The protein belongs to the dCTP deaminase family. As to quaternary structure, homotrimer.

The catalysed reaction is dCTP + 2 H2O = dUMP + NH4(+) + diphosphate. The protein operates within pyrimidine metabolism; dUMP biosynthesis; dUMP from dCTP: step 1/1. In terms of biological role, bifunctional enzyme that catalyzes both the deamination of dCTP to dUTP and the hydrolysis of dUTP to dUMP without releasing the toxic dUTP intermediate. The sequence is that of dCTP deaminase, dUMP-forming from Leptospira interrogans serogroup Icterohaemorrhagiae serovar copenhageni (strain Fiocruz L1-130).